Here is a 451-residue protein sequence, read N- to C-terminus: Phosphoglucosamine mutase (451 aa).

Ser101 (phosphoserine intermediate) is an active-site residue. Mg(2+) contacts are provided by Ser101, Asp240, Asp242, and Asp244. Ser101 carries the phosphoserine modification.

The protein belongs to the phosphohexose mutase family. The cofactor is Mg(2+). Post-translationally, activated by phosphorylation.

It catalyses the reaction alpha-D-glucosamine 1-phosphate = D-glucosamine 6-phosphate. In terms of biological role, catalyzes the conversion of glucosamine-6-phosphate to glucosamine-1-phosphate. In Alkalilimnicola ehrlichii (strain ATCC BAA-1101 / DSM 17681 / MLHE-1), this protein is Phosphoglucosamine mutase.